The following is a 149-amino-acid chain: D-aminoacyl-tRNA deacylase (149 aa).

The short motif at 137–138 (GP) is the Gly-cisPro motif, important for rejection of L-amino acids element.

The protein belongs to the DTD family. As to quaternary structure, homodimer.

Its subcellular location is the cytoplasm. The catalysed reaction is glycyl-tRNA(Ala) + H2O = tRNA(Ala) + glycine + H(+). It catalyses the reaction a D-aminoacyl-tRNA + H2O = a tRNA + a D-alpha-amino acid + H(+). An aminoacyl-tRNA editing enzyme that deacylates mischarged D-aminoacyl-tRNAs. Also deacylates mischarged glycyl-tRNA(Ala), protecting cells against glycine mischarging by AlaRS. Acts via tRNA-based rather than protein-based catalysis; rejects L-amino acids rather than detecting D-amino acids in the active site. By recycling D-aminoacyl-tRNA to D-amino acids and free tRNA molecules, this enzyme counteracts the toxicity associated with the formation of D-aminoacyl-tRNA entities in vivo and helps enforce protein L-homochirality. The chain is D-aminoacyl-tRNA deacylase from Caldicellulosiruptor bescii (strain ATCC BAA-1888 / DSM 6725 / KCTC 15123 / Z-1320) (Anaerocellum thermophilum).